The sequence spans 133 residues: Interleukin-4 (133 aa).

The first 24 residues, 1-24 (MGLTSQLIPTLVCLLVCTSNFAHG), serve as a signal peptide directing secretion. Cystine bridges form between Cys-27–Cys-133, Cys-48–Cys-85, and Cys-70–Cys-105. N-linked (GlcNAc...) asparagine glycosylation is found at Asn-62, Asn-96, Asn-102, and Asn-108.

It belongs to the IL-4/IL-13 family.

The protein resides in the secreted. Functionally, participates in at least several B-cell activation processes as well as of other cell types. It is a costimulator of DNA-synthesis. It induces the expression of class II MHC molecules on resting B-cells. It enhances both secretion and cell surface expression of IgE and IgG1. It also regulates the expression of the low affinity Fc receptor for IgE (CD23) on both lymphocytes and monocytes. Positively regulates IL31RA expression in macrophages. Stimulates autophagy in dendritic cells by interfering with mTORC1 signaling and through the induction of RUFY4. The polypeptide is Interleukin-4 (IL4) (Lama glama (Llama)).